The following is a 493-amino-acid chain: Cholesteryl ester transfer protein (493 aa).

The first 17 residues, 1 to 17, serve as a signal peptide directing secretion; that stretch reads MLAATVLTLALLGNVHA. 2 N-linked (GlcNAc...) asparagine glycosylation sites follow: Asn59 and Asn105. Cys160 and Cys201 are joined by a disulfide. 3 N-linked (GlcNAc...) asparagine glycosylation sites follow: Asn257, Asn358, and Asn413.

The protein belongs to the BPI/LBP/Plunc superfamily. BPI/LBP family. In terms of tissue distribution, probably primarily expressed in liver and adipose tissues. Detected in adrenal gland, mesenteric fat, spleen and aorta.

It is found in the secreted. It catalyses the reaction cholesteryl (9Z-octadecenoate)(in) = cholesteryl (9Z-octadecenoate)(out). The enzyme catalyses 1,2,3-tri-(9Z-octadecenoyl)-glycerol(in) = 1,2,3-tri-(9Z-octadecenoyl)-glycerol(out). The catalysed reaction is cholesteryl (9Z,12Z)-octadecadienoate(in) = cholesteryl (9Z,12Z)-octadecadienoate(out). Functionally, involved in the transfer of neutral lipids, including cholesteryl ester and triglyceride, among lipoprotein particles. Allows the net movement of cholesteryl ester from high density lipoproteins/HDL to triglyceride-rich very low density lipoproteins/VLDL, and the equimolar transport of triglyceride from VLDL to HDL. Regulates the reverse cholesterol transport, by which excess cholesterol is removed from peripheral tissues and returned to the liver for elimination. The sequence is that of Cholesteryl ester transfer protein from Macaca fascicularis (Crab-eating macaque).